The following is a 576-amino-acid chain: Arginine--tRNA ligase (576 aa).

The 'HIGH' region motif lies at 122–132; sequence PNVAKQMHVGH.

This sequence belongs to the class-I aminoacyl-tRNA synthetase family. In terms of assembly, monomer.

The protein localises to the cytoplasm. It catalyses the reaction tRNA(Arg) + L-arginine + ATP = L-arginyl-tRNA(Arg) + AMP + diphosphate. This is Arginine--tRNA ligase from Yersinia pestis bv. Antiqua (strain Antiqua).